The following is a 73-amino-acid chain: MAVPKKRTSASKKRIRKNSWKGKGYGTALKAFSLGKSLSTGNSKSFFVPKNSLKVFKRIIKNWNNLNRLGSKN.

It belongs to the bacterial ribosomal protein bL32 family.

It localises to the plastid. The protein localises to the chloroplast. This Jasminum nudiflorum (Winter jasmine) protein is Large ribosomal subunit protein bL32c.